The sequence spans 775 residues: Major facilitator superfamily domain-containing protein 6 (775 aa).

Thr-11 bears the Phosphothreonine mark. The segment at 28-47 (NGICREPEPPSNETPSSTET) is disordered. Low complexity predominate over residues 38–47 (SNETPSSTET). 12 helical membrane-spanning segments follow: residues 74–94 (VFYF…PVYY), 106–126 (LLVG…GVVA), 133–153 (KIVL…IGFV), 289–309 (AIFL…ASSV), 338–358 (WGLA…DVLI), 372–392 (QIVF…ATQF), 453–473 (VLFV…FLYW), 482–502 (TTLF…AYFF), 510–530 (IGHI…YIYI), 547–567 (GVTH…AVPP), 582–602 (LGLG…YFGA), and 608–628 (GIGM…WLAV).

Belongs to the major facilitator superfamily. MFSD6 family.

The protein localises to the membrane. In terms of biological role, MHC class I receptor. Binds only to H-2 class I histocompatibility antigen, K-D alpha chain (H-2K(D)). The protein is Major facilitator superfamily domain-containing protein 6 (Mfsd6) of Mus musculus (Mouse).